The sequence spans 330 residues: Phosphate acyltransferase (330 aa).

The protein belongs to the PlsX family. In terms of assembly, homodimer. Probably interacts with PlsY.

The protein localises to the cytoplasm. It carries out the reaction a fatty acyl-[ACP] + phosphate = an acyl phosphate + holo-[ACP]. It participates in lipid metabolism; phospholipid metabolism. Its function is as follows. Catalyzes the reversible formation of acyl-phosphate (acyl-PO(4)) from acyl-[acyl-carrier-protein] (acyl-ACP). This enzyme utilizes acyl-ACP as fatty acyl donor, but not acyl-CoA. This Lactobacillus delbrueckii subsp. bulgaricus (strain ATCC BAA-365 / Lb-18) protein is Phosphate acyltransferase.